The primary structure comprises 138 residues: Large ribosomal subunit protein bL19 (138 aa).

This sequence belongs to the bacterial ribosomal protein bL19 family.

This protein is located at the 30S-50S ribosomal subunit interface and may play a role in the structure and function of the aminoacyl-tRNA binding site. This Rickettsia canadensis (strain McKiel) protein is Large ribosomal subunit protein bL19.